The sequence spans 647 residues: Nucleolar GTP-binding protein 1 (647 aa).

The region spanning 168 to 340 (RTLLICGYPN…VRNKACEKLL (173 aa)) is the OBG-type G domain. Residues 174 to 181 (GYPNVGKS), 220 to 224 (DTPGI), and 288 to 291 (NKTD) contribute to the GTP site. A Phosphoserine modification is found at serine 563. A disordered region spans residues 594–647 (ADGSMRSKADRMAKMERRERNRHAKQGESDRHNAVSLSKHLFSGKRGVGKTDFR). Over residues 598–626 (MRSKADRMAKMERRERNRHAKQGESDRHN) the composition is skewed to basic and acidic residues.

It belongs to the TRAFAC class OBG-HflX-like GTPase superfamily. OBG GTPase family. NOG subfamily. Associated with nucleolar and cytoplasmic pre-60S particles. Directly interacts with RLP24.

It is found in the nucleus. Its subcellular location is the nucleolus. Its function is as follows. Involved in the biogenesis of the 60S ribosomal subunit. The chain is Nucleolar GTP-binding protein 1 (NOG1) from Saccharomyces cerevisiae (strain ATCC 204508 / S288c) (Baker's yeast).